A 250-amino-acid chain; its full sequence is NAD(P)H-quinone oxidoreductase subunit K (250 aa).

Residues C60, C61, C125, and C156 each contribute to the [4Fe-4S] cluster site. The interval 230–250 (ELNTSEIDASPASQPSSTYES) is disordered. The segment covering 231-250 (LNTSEIDASPASQPSSTYES) has biased composition (polar residues).

Belongs to the complex I 20 kDa subunit family. NDH-1 can be composed of about 15 different subunits; different subcomplexes with different compositions have been identified which probably have different functions. [4Fe-4S] cluster serves as cofactor.

It localises to the cellular thylakoid membrane. It carries out the reaction a plastoquinone + NADH + (n+1) H(+)(in) = a plastoquinol + NAD(+) + n H(+)(out). The catalysed reaction is a plastoquinone + NADPH + (n+1) H(+)(in) = a plastoquinol + NADP(+) + n H(+)(out). Its function is as follows. NDH-1 shuttles electrons from an unknown electron donor, via FMN and iron-sulfur (Fe-S) centers, to quinones in the respiratory and/or the photosynthetic chain. The immediate electron acceptor for the enzyme in this species is believed to be plastoquinone. Couples the redox reaction to proton translocation, and thus conserves the redox energy in a proton gradient. Cyanobacterial NDH-1 also plays a role in inorganic carbon-concentration. The sequence is that of NAD(P)H-quinone oxidoreductase subunit K from Prochlorococcus marinus (strain MIT 9303).